Here is a 341-residue protein sequence, read N- to C-terminus: Oxidoreductase swnN (341 aa).

The protein belongs to the NmrA-type oxidoreductase family. Isoflavone reductase subfamily.

It participates in mycotoxin biosynthesis. Oxidoreductase; part of the gene cluster that mediates the biosynthesis of swainsonine (SW), a cytotoxic fungal alkaloid and a potential cancer therapy drug. Swainsonine production occurs via a multibranched pathway and is dispensable for fungal colonization of plants and infection of insect hosts. The first step of swainsonine biosynthesis is the production of the precursor pipecolic acid (PA) via conversion of L-lysine (Lys) to 1-piperideine-6-carboxylate (P6C) by the aminotransferase swnA, the latter being further reduced to PA by the reductase swnR. PA can be converted from lysine by both the SW biosynthetic cluster and the unclustered genes such as lysine cyclodeaminase. The PKS-NRPS hybrid synthetase swnK uptakes and condensates PA and malonyl-CoA with and without skipping of the ketoreductase (KR) domain in order to produce 3 intermediates, 1-oxoindolizidine, (1S)-1-hydroxyindolizin, and (1R)-1-hydroxyindolizine; with the transisomer (1S)-1-hydroxyindolizin being predominant. The terminal thioester reductase (TE) domain of swnK is involved in reduction of the thioester bond to release the intermediate aldehydes. The oxidoreductase swnN could contribute to the reduction of 1-oxoindolizidine to (1S)-1-hydroxyindolizin and (1R)-1-hydroxyindolizine, contributing to the major route of SW production. The dioxygenase swnH2 would be responsible for the oxidization of (1R)-1-hydroxyindolizine into (1R,2S)-1,2-dihydroxyindolizine and of (1S)-1-hydroxyindolizin to yield both (1R,2S)-1,2-dihydroxyindolizine and (1S,2S)-1,2-dihydroxyindolizine. The dioxygenase swnH1 then performs the conversion of the 1,2-dihydroxyindolizine epimers to SW. The protein is Oxidoreductase swnN of Metarhizium robertsii (strain ARSEF 23 / ATCC MYA-3075) (Metarhizium anisopliae (strain ARSEF 23)).